A 404-amino-acid chain; its full sequence is MVYSPMSRPQVPLAFRQWPPYNYKSDPLVNSKLSQSTTSVNAGPSLISPSFLDSYANSSSLLHKPSTNLGSLKTSSLLASDEVFPSSVMPQLRPLDSSLSVSPEMDGWPWHHNSSSNPQGYAWTPSLLSSNATSYLHSGSSPHGNTSNHPSPISSLESLPSRSSTGSGSLDFSGLANLHDDSKSLAMSLNMAGVPVSVDENSQTSFPFVHGQPESTMSRKPKLCVQSKSMTNIRNSVAKPSLVRQSHSAGVIPIKPTASNASIRNAPSNLSKQFSPSGNSPLTEASKPFVPQPSAAGDFRQAKGSASHPHGSGSSNGVAPNGKRALYKTEPCKNWQISGTCRYGSKCQFAHGNQELKEPPRHPKYKSERCRSFMMYGYCPYGLRCCFLHDESNAQKSATIKQSP.

Residues 134–149 show a composition bias toward polar residues; sequence SYLHSGSSPHGNTSNH. Disordered regions lie at residues 134–168 and 259–322; these read SYLH…TGSG and SNAS…APNG. Low complexity predominate over residues 150-168; sequence PSPISSLESLPSRSSTGSG. The segment covering 259-283 has biased composition (polar residues); the sequence is SNASIRNAPSNLSKQFSPSGNSPLT. Residues 304 to 317 are compositionally biased toward low complexity; that stretch reads GSASHPHGSGSSNG. C3H1-type zinc fingers lie at residues 326–354 and 364–392; these read LYKT…HGNQ and KYKS…HDES.

Interacts with moc3.

The protein localises to the cytoplasm. It is found in the nucleus. Its function is as follows. Binds to specific AU-rich elements (ARE) in the 3'-untranslated region of target mRNAs and promotes their degradation. Binds to ARE present in the arz1 mRNA and stimulates the rate of arz1 mRNA decay. Required for coordination of septum formation with exit from mitosis. Involved in the mating response pathway. Induces sexual development and ascus formation. The chain is Zinc finger protein zfs1 (zfs1) from Schizosaccharomyces pombe (strain 972 / ATCC 24843) (Fission yeast).